A 323-amino-acid chain; its full sequence is GDP-L-fucose synthase 1 (323 aa).

Ala-2 bears the N-acetylalanine mark. Residue 23-29 (GHRGLVG) participates in NADP(+) binding. Residue Tyr-149 is the Proton donor/acceptor of the active site. NADP(+) is bound by residues Lys-153, 176–179 (PTNL), and His-192. Residues Arg-200, Trp-215, Arg-222, and Asp-282 each contribute to the substrate site.

This sequence belongs to the NAD(P)-dependent epimerase/dehydratase family. Fucose synthase subfamily. Binds and stabilizes MUR1. Homodimer. Highly expressed in roots and flowers, less abundant in leaves, stems and siliques.

It catalyses the reaction GDP-beta-L-fucose + NADP(+) = GDP-4-dehydro-alpha-D-rhamnose + NADPH + H(+). It functions in the pathway nucleotide-sugar biosynthesis; GDP-L-fucose biosynthesis via de novo pathway; GDP-L-fucose from GDP-alpha-D-mannose: step 2/2. Its function is as follows. Catalyzes the two-step NADP-dependent conversion of GDP-4-dehydro-6-deoxy-D-mannose to GDP-fucose, involving an epimerase and a reductase reaction. Not involved in the synthesis of GDP-L-galactose from GDP-D-mannose. The polypeptide is GDP-L-fucose synthase 1 (GER1) (Arabidopsis thaliana (Mouse-ear cress)).